The following is a 655-amino-acid chain: p-hydroxybenzoic acid efflux pump subunit AaeB (655 aa).

The next 11 membrane-spanning stretches (helical) occupy residues Phe-13 to Leu-33, Trp-38 to Pro-58, Leu-69 to Ile-89, Leu-93 to Val-113, Trp-121 to Leu-141, Glu-152 to Ile-172, Leu-370 to Val-390, Phe-407 to Pro-427, Gln-431 to Val-451, Met-459 to Phe-479, and Phe-482 to Leu-502.

This sequence belongs to the aromatic acid exporter ArAE (TC 2.A.85) family.

The protein resides in the cell inner membrane. In terms of biological role, forms an efflux pump with AaeA. Could function as a metabolic relief valve, allowing to eliminate certain compounds when they accumulate to high levels in the cell. In Escherichia coli O6:K15:H31 (strain 536 / UPEC), this protein is p-hydroxybenzoic acid efflux pump subunit AaeB.